The following is a 424-amino-acid chain: Serine--tRNA ligase (424 aa).

Residue 231-233 (TAE) coordinates L-serine. Residue 262–264 (RAE) participates in ATP binding. Glutamate 285 lines the L-serine pocket. Residue 349–352 (EISS) participates in ATP binding. An L-serine-binding site is contributed by serine 385.

This sequence belongs to the class-II aminoacyl-tRNA synthetase family. Type-1 seryl-tRNA synthetase subfamily. In terms of assembly, homodimer. The tRNA molecule binds across the dimer.

The protein resides in the cytoplasm. It catalyses the reaction tRNA(Ser) + L-serine + ATP = L-seryl-tRNA(Ser) + AMP + diphosphate + H(+). The enzyme catalyses tRNA(Sec) + L-serine + ATP = L-seryl-tRNA(Sec) + AMP + diphosphate + H(+). It participates in aminoacyl-tRNA biosynthesis; selenocysteinyl-tRNA(Sec) biosynthesis; L-seryl-tRNA(Sec) from L-serine and tRNA(Sec): step 1/1. Catalyzes the attachment of serine to tRNA(Ser). Is also able to aminoacylate tRNA(Sec) with serine, to form the misacylated tRNA L-seryl-tRNA(Sec), which will be further converted into selenocysteinyl-tRNA(Sec). In Geobacillus sp. (strain WCH70), this protein is Serine--tRNA ligase.